Consider the following 234-residue polypeptide: Adenosine 5'-phosphosulfate reductase (234 aa).

Cys120, Cys121, Cys203, and Cys206 together coordinate [4Fe-4S] cluster. Residue Cys229 is the Nucleophile; cysteine thiosulfonate intermediate of the active site.

It belongs to the PAPS reductase family. CysH subfamily. Requires [4Fe-4S] cluster as cofactor.

The protein localises to the cytoplasm. It catalyses the reaction [thioredoxin]-disulfide + sulfite + AMP + 2 H(+) = adenosine 5'-phosphosulfate + [thioredoxin]-dithiol. The protein operates within sulfur metabolism; hydrogen sulfide biosynthesis; sulfite from sulfate. In terms of biological role, catalyzes the formation of sulfite from adenosine 5'-phosphosulfate (APS) using thioredoxin as an electron donor. In Bacillus cereus (strain ATCC 14579 / DSM 31 / CCUG 7414 / JCM 2152 / NBRC 15305 / NCIMB 9373 / NCTC 2599 / NRRL B-3711), this protein is Adenosine 5'-phosphosulfate reductase.